A 308-amino-acid polypeptide reads, in one-letter code: Reticulon-like protein 1 (308 aa).

2 stretches are compositionally biased toward polar residues: residues 1–17 and 41–66; these read MSEQ…SVTA and PSTE…IQNI. Disordered regions lie at residues 1–22 and 41–92; these read MSEQ…DVAA and PSTE…CPVS. Asparagine 65 carries N-linked (GlcNAc...) asparagine glycosylation. Residues 67-81 are compositionally biased toward low complexity; that stretch reads SSSSSEPHHTSQSTP. N-linked (GlcNAc...) asparagine glycosylation is found at asparagine 113 and asparagine 135. Residues 127-308 form the Reticulon domain; it reads LWSVLTWKNT…TETINTTVNK (182 aa). Transmembrane regions (helical) follow at residues 138 to 158, 166 to 186, 233 to 253, and 255 to 275; these read CSFS…WINL, FRYV…ASNG, PILT…SGFL, and YKSL…LYVC. An N-linked (GlcNAc...) asparagine glycan is attached at asparagine 303.

In terms of assembly, interacts with TTS1 and YOP1.

The protein localises to the endoplasmic reticulum membrane. It is found in the nucleus membrane. Functionally, required for the correct positioning of the cellular division plane by delimiting the actomyosin ring assembly at the cell equator. Overexpression causes cell lysis. This Schizosaccharomyces pombe (strain 972 / ATCC 24843) (Fission yeast) protein is Reticulon-like protein 1 (rtn1).